Consider the following 169-residue polypeptide: 2-C-methyl-D-erythritol 2,4-cyclodiphosphate synthase (169 aa).

A divalent metal cation is bound by residues Asp-13 and His-15. 4-CDP-2-C-methyl-D-erythritol 2-phosphate contacts are provided by residues 13–15 and 39–40; these read DVH and HS. His-47 contributes to the a divalent metal cation binding site. Residues 61 to 63, 66 to 70, Phe-144, and Arg-147 each bind 4-CDP-2-C-methyl-D-erythritol 2-phosphate; these read DIG and FPDTD.

Belongs to the IspF family. As to quaternary structure, homotrimer. The cofactor is a divalent metal cation.

The enzyme catalyses 4-CDP-2-C-methyl-D-erythritol 2-phosphate = 2-C-methyl-D-erythritol 2,4-cyclic diphosphate + CMP. It participates in isoprenoid biosynthesis; isopentenyl diphosphate biosynthesis via DXP pathway; isopentenyl diphosphate from 1-deoxy-D-xylulose 5-phosphate: step 4/6. In terms of biological role, involved in the biosynthesis of isopentenyl diphosphate (IPP) and dimethylallyl diphosphate (DMAPP), two major building blocks of isoprenoid compounds. Catalyzes the conversion of 4-diphosphocytidyl-2-C-methyl-D-erythritol 2-phosphate (CDP-ME2P) to 2-C-methyl-D-erythritol 2,4-cyclodiphosphate (ME-CPP) with a corresponding release of cytidine 5-monophosphate (CMP). The polypeptide is 2-C-methyl-D-erythritol 2,4-cyclodiphosphate synthase (Cupriavidus necator (strain ATCC 17699 / DSM 428 / KCTC 22496 / NCIMB 10442 / H16 / Stanier 337) (Ralstonia eutropha)).